The following is a 208-amino-acid chain: Large ribosomal subunit protein bL25 (208 aa).

It belongs to the bacterial ribosomal protein bL25 family. CTC subfamily. Part of the 50S ribosomal subunit; part of the 5S rRNA/L5/L18/L25 subcomplex. Contacts the 5S rRNA. Binds to the 5S rRNA independently of L5 and L18.

Functionally, this is one of the proteins that binds to the 5S RNA in the ribosome where it forms part of the central protuberance. In Burkholderia thailandensis (strain ATCC 700388 / DSM 13276 / CCUG 48851 / CIP 106301 / E264), this protein is Large ribosomal subunit protein bL25.